The primary structure comprises 380 residues: tRNA-specific 2-thiouridylase MnmA (380 aa).

Residues 14-21 and Met-40 each bind ATP; that span reads GLSGGVDS. Residues 100–102 are interaction with target base in tRNA; sequence NPD. The Nucleophile role is filled by Cys-105. The cysteines at positions 105 and 203 are disulfide-linked. Position 129 (Gly-129) interacts with ATP. Positions 153-155 are interaction with tRNA; it reads KDQ. The active-site Cysteine persulfide intermediate is Cys-203. Residues 322 to 323 form an interaction with tRNA region; it reads RY.

Belongs to the MnmA/TRMU family.

It is found in the cytoplasm. It catalyses the reaction S-sulfanyl-L-cysteinyl-[protein] + uridine(34) in tRNA + AH2 + ATP = 2-thiouridine(34) in tRNA + L-cysteinyl-[protein] + A + AMP + diphosphate + H(+). Catalyzes the 2-thiolation of uridine at the wobble position (U34) of tRNA, leading to the formation of s(2)U34. The sequence is that of tRNA-specific 2-thiouridylase MnmA from Leptothrix cholodnii (strain ATCC 51168 / LMG 8142 / SP-6) (Leptothrix discophora (strain SP-6)).